The primary structure comprises 199 residues: ATP-dependent Clp protease proteolytic subunit (199 aa).

S97 functions as the Nucleophile in the catalytic mechanism. The active site involves H122.

It belongs to the peptidase S14 family. As to quaternary structure, fourteen ClpP subunits assemble into 2 heptameric rings which stack back to back to give a disk-like structure with a central cavity, resembling the structure of eukaryotic proteasomes.

The protein resides in the cytoplasm. It catalyses the reaction Hydrolysis of proteins to small peptides in the presence of ATP and magnesium. alpha-casein is the usual test substrate. In the absence of ATP, only oligopeptides shorter than five residues are hydrolyzed (such as succinyl-Leu-Tyr-|-NHMec, and Leu-Tyr-Leu-|-Tyr-Trp, in which cleavage of the -Tyr-|-Leu- and -Tyr-|-Trp bonds also occurs).. In terms of biological role, cleaves peptides in various proteins in a process that requires ATP hydrolysis. Has a chymotrypsin-like activity. Plays a major role in the degradation of misfolded proteins. In Geobacter sulfurreducens (strain ATCC 51573 / DSM 12127 / PCA), this protein is ATP-dependent Clp protease proteolytic subunit.